The primary structure comprises 901 residues: Protein translocase subunit SecA (901 aa).

Residues Gln85, 103–107 (GEGKT), and Asp510 contribute to the ATP site. The disordered stretch occupies residues 848–901 (RINQNNLPVDENSQTTQNSETEDYSDRRIGRNEPCPCGSGKKYKHCHGSRVARQ). A compositionally biased stretch (polar residues) spans 849–866 (INQNNLPVDENSQTTQNS). Zn(2+) is bound by residues Cys882, Cys884, Cys893, and His894. The span at 888–901 (KKYKHCHGSRVARQ) shows a compositional bias: basic residues.

Belongs to the SecA family. As to quaternary structure, monomer and homodimer. Part of the essential Sec protein translocation apparatus which comprises SecA, SecYEG and auxiliary proteins SecDF-YajC and YidC. Forms a complex with SecB. It depends on Zn(2+) as a cofactor.

It localises to the cell inner membrane. Its subcellular location is the cytoplasm. It carries out the reaction ATP + H2O + cellular proteinSide 1 = ADP + phosphate + cellular proteinSide 2.. In terms of biological role, part of the Sec protein translocase complex. Interacts with the SecYEG preprotein conducting channel. Has a central role in coupling the hydrolysis of ATP to the transfer of proteins into and across the cell membrane, serving both as a receptor for the preprotein-SecB complex and as an ATP-driven molecular motor driving the stepwise translocation of polypeptide chains across the membrane. This is Protein translocase subunit SecA from Haemophilus influenzae (strain ATCC 51907 / DSM 11121 / KW20 / Rd).